Reading from the N-terminus, the 265-residue chain is Mlc titration factor A (265 aa).

Positions 111, 148, 152, and 211 each coordinate Zn(2+).

It belongs to the MtfA family. In terms of assembly, interacts with Mlc. Requires Zn(2+) as cofactor.

Its subcellular location is the cytoplasm. Involved in the modulation of the activity of the glucose-phosphotransferase system (glucose-PTS). Interacts with the transcriptional repressor Mlc, preventing its interaction with DNA and leading to the modulation of expression of genes regulated by Mlc, including ptsG, which encodes the PTS system glucose-specific EIICB component. Functionally, shows zinc-dependent metallopeptidase activity. This chain is Mlc titration factor A, found in Escherichia coli O127:H6 (strain E2348/69 / EPEC).